The sequence spans 96 residues: Small ribosomal subunit protein bS6 (96 aa).

It belongs to the bacterial ribosomal protein bS6 family.

In terms of biological role, binds together with bS18 to 16S ribosomal RNA. The sequence is that of Small ribosomal subunit protein bS6 from Salinispora arenicola (strain CNS-205).